We begin with the raw amino-acid sequence, 337 residues long: Deoxyhypusine hydroxylase (337 aa).

HEAT-like PBS-type repeat units follow at residues 73–99 (LKHE…VLSD) and 106–132 (CRHE…YRDR). Residues His75, Glu76, His108, and Glu109 each coordinate Fe cation. Basic and acidic residues predominate over residues 156 to 165 (AERQKEKLRP). The segment at 156-183 (AERQKEKLRPSDFASIDPAPPMPESDKE) is disordered. 3 HEAT-like PBS-type repeats span residues 202 to 235 (SRYR…GLSD), 240 to 266 (FRHE…ALSN), and 273 to 300 (VRHE…FLHD). Fe cation contacts are provided by His242, Glu243, His275, and Glu276.

The protein belongs to the deoxyhypusine hydroxylase family. Requires Fe(2+) as cofactor.

The protein localises to the cytoplasm. Its subcellular location is the nucleus. The enzyme catalyses [eIF5A protein]-deoxyhypusine + AH2 + O2 = [eIF5A protein]-hypusine + A + H2O. It functions in the pathway protein modification; eIF5A hypusination. In terms of biological role, catalyzes the hydroxylation of the N(6)-(4-aminobutyl)-L-lysine intermediate to form hypusine, an essential post-translational modification only found in mature eIF-5A factor. This Gibberella zeae (strain ATCC MYA-4620 / CBS 123657 / FGSC 9075 / NRRL 31084 / PH-1) (Wheat head blight fungus) protein is Deoxyhypusine hydroxylase.